A 528-amino-acid polypeptide reads, in one-letter code: Protein spinster homolog 1 (528 aa).

The segment at 1-38 (MAGSDTAPFLSQADDPDDGPAPGHPGLPGPMGNPKSGE) is disordered. Residue A2 is modified to N-acetylalanine. 12 consecutive transmembrane segments (helical) span residues 60–80 (LIVVVLCYINLLNYMDRFTVA), 98–118 (GLIQTVFISSYMVLAPVFGYL), 126–146 (YLMCGGIAFWSLVTLGSSFIP), 160–180 (VGVGEASYSTIAPTLIADLFV), 187–207 (MLSIFYFAIPVGSGLGYIAGS), 218–238 (WALRVTPGLGVLAVLLLFLVV), 278–298 (LGFTAVAFVTGSLALWAPAFL), 323–343 (LIFGLITCLTGVLGVGLGVEI), 357–377 (LVCAAGLLGSSPFLFLSLACA), 381–401 (IVATYIFIFIGETLLSMNWAI), 421–441 (FQIVLSHLLGDAGSPYLIGLI), and 465–485 (MLCAFVGALGGAAFLGTAMFI). At S518 the chain carries Phosphoserine.

Belongs to the major facilitator superfamily. Spinster (TC 2.A.1.49) family. As to quaternary structure, interacts with BCL2 and BCL2L1.

It is found in the lysosome membrane. The catalysed reaction is a 1-acyl-sn-glycero-3-phosphocholine(out) + H(+)(out) = a 1-acyl-sn-glycero-3-phosphocholine(in) + H(+)(in). It catalyses the reaction 1-hexadecanoyl-sn-glycero-3-phosphocholine(out) + H(+)(out) = 1-hexadecanoyl-sn-glycero-3-phosphocholine(in) + H(+)(in). The enzyme catalyses 1-(9Z-octadecenoyl)-sn-glycero-3-phosphocholine(out) + H(+)(out) = 1-(9Z-octadecenoyl)-sn-glycero-3-phosphocholine(in) + H(+)(in). It carries out the reaction 1-(5Z,8Z,11Z,14Z-eicosatetraenoyl)-sn-glycero-3-phosphocholine(out) + H(+)(out) = 1-(5Z,8Z,11Z,14Z-eicosatetraenoyl)-sn-glycero-3-phosphocholine(in) + H(+)(in). The catalysed reaction is 1-(4Z,7Z,10Z,13Z,16Z,19Z-docosahexaenoyl)-sn-glycero-3-phosphocholine(out) + H(+)(out) = 1-(4Z,7Z,10Z,13Z,16Z,19Z-docosahexaenoyl)-sn-glycero-3-phosphocholine(in) + H(+)(in). It catalyses the reaction a 1-acyl-sn-glycero-3-phosphoethanolamine(out) + H(+)(out) = a 1-acyl-sn-glycero-3-phosphoethanolamine(in) + H(+)(in). The enzyme catalyses 1-(9Z-octadecenoyl)-sn-glycero-3-phosphoethanolamine(out) + H(+)(out) = 1-(9Z-octadecenoyl)-sn-glycero-3-phosphoethanolamine(in) + H(+)(in). It carries out the reaction 1-acyl-sn-glycero-3-phospho-(1'-sn-glycerol)(out) + H(+)(out) = 1-acyl-sn-glycero-3-phospho-(1'-sn-glycerol)(in) + H(+)(in). The catalysed reaction is 1-(9Z-octadecenoyl)-sn-glycero-3-phospho-(1'-sn-glycerol)(out) + H(+)(out) = 1-(9Z-octadecenoyl)-sn-glycero-3-phospho-(1'-sn-glycerol)(in) + H(+)(in). It catalyses the reaction a 1-O-(1Z-alkenyl)-sn-glycero-3-phosphocholine(out) + H(+)(out) = a 1-O-(1Z-alkenyl)-sn-glycero-3-phosphocholine(in) + H(+)(in). The enzyme catalyses 1-(1Z-hexadecenyl)-sn-glycero-3-phosphocholine(out) + H(+)(out) = 1-(1Z-hexadecenyl)-sn-glycero-3-phosphocholine(in) + H(+)(in). It carries out the reaction a 1-O-(1Z-alkenyl)-sn-glycero-3-phosphoethanolamine(out) + H(+)(out) = a 1-O-(1Z-alkenyl)-sn-glycero-3-phosphoethanolamine(in) + H(+)(in). The catalysed reaction is 1-O-(1Z-hexadecenyl)-sn-glycero-3-phosphoethanolamine(out) + H(+)(out) = 1-O-(1Z-hexadecenyl)-sn-glycero-3-phosphoethanolamine(in) + H(+)(in). Its function is as follows. Plays a critical role in the phospholipid salvage pathway from lysosomes to the cytosol. Mediates the rate-limiting, proton-dependent, lysosomal efflux of lysophospholipids, which can then be reacylated by acyltransferases in the endoplasmic reticulum to form phospholipids. Selective for zwitterionic headgroups such as lysophosphatidylcholine (LPC) and lysophosphatidylethanolamine (LPE), can also transport lysophosphatidylglycerol (LPG), but not other anionic lysophospholipids, sphingosine, nor sphingomyelin. Transports lysophospholipids with saturated, monounsaturated, and polyunsaturated fatty acids, such as 1-hexadecanoyl-sn-glycero-3-phosphocholine, 1-(9Z-octadecenoyl)-sn-glycero-3-phosphocholine and 1-(4Z,7Z,10Z,13Z,16Z,19Z-docosahexaenoyl)-sn-glycero-3-phosphocholine, respectively. Can also transport lysoplasmalogen (LPC with a fatty alcohol) such as 1-(1Z-hexadecenyl)-sn-glycero-3-phosphocholine. Essential player in lysosomal homeostasis. Crucial for cell survival under conditions of nutrient limitation. May be involved in necrotic or autophagic cell death. This Rattus norvegicus (Rat) protein is Protein spinster homolog 1 (Spns1).